Reading from the N-terminus, the 297-residue chain is Tyrosine recombinase XerD (297 aa).

Residues 1-87 (MLEYAIEDFF…SIRSFHQFLI (87 aa)) form the Core-binding (CB) domain. Residues 108–291 (KLPDILSQDE…TKARLKDMYQ (184 aa)) form the Tyr recombinase domain. Residues Arg-147, Lys-171, His-243, Arg-246, and His-269 contribute to the active site. Tyr-278 functions as the O-(3'-phospho-DNA)-tyrosine intermediate in the catalytic mechanism.

This sequence belongs to the 'phage' integrase family. XerD subfamily. Forms a cyclic heterotetrameric complex composed of two molecules of XerC and two molecules of XerD.

It localises to the cytoplasm. Functionally, site-specific tyrosine recombinase, which acts by catalyzing the cutting and rejoining of the recombining DNA molecules. The XerC-XerD complex is essential to convert dimers of the bacterial chromosome into monomers to permit their segregation at cell division. It also contributes to the segregational stability of plasmids. In Oceanobacillus iheyensis (strain DSM 14371 / CIP 107618 / JCM 11309 / KCTC 3954 / HTE831), this protein is Tyrosine recombinase XerD.